The sequence spans 250 residues: 23S rRNA (guanosine-2'-O-)-methyltransferase RlmB (250 aa).

Residues Gly197, Ile217, and Met226 each contribute to the S-adenosyl-L-methionine site.

It belongs to the class IV-like SAM-binding methyltransferase superfamily. RNA methyltransferase TrmH family. RlmB subfamily.

Its subcellular location is the cytoplasm. The catalysed reaction is guanosine(2251) in 23S rRNA + S-adenosyl-L-methionine = 2'-O-methylguanosine(2251) in 23S rRNA + S-adenosyl-L-homocysteine + H(+). Specifically methylates the ribose of guanosine 2251 in 23S rRNA. In Neisseria meningitidis serogroup B (strain ATCC BAA-335 / MC58), this protein is 23S rRNA (guanosine-2'-O-)-methyltransferase RlmB.